Consider the following 24-residue polypeptide: Outer membrane protein (24 aa).

Belongs to the Gram-negative porin family. Homotrimer.

It localises to the cell outer membrane. Functionally, forms pores that allow passive diffusion of small molecules across the outer membrane. The sequence is that of Outer membrane protein from Sodalis glossinidius.